Consider the following 994-residue polypeptide: Cation-chloride cotransporter 2 (994 aa).

The segment at 1–28 (MERGGFGGAGRHDEEAPAMRPAPQQRYR) is disordered. Residues 1 to 139 (MERGGFGGAG…GHPKETETKL (139 aa)) are Cytoplasmic-facing. The helical transmembrane segment at 140–160 (DTMMGVFVPCLQNILGIIYYI) threads the bilayer. The Extracellular portion of the chain corresponds to 161-174 (RFTWIVGMGGVWQS). The helical transmembrane segment at 175 to 195 (LVLVAFCGSCTFLTTISLSAI) threads the bilayer. Residues 196–221 (ATNGAMKGGGPYYLIGRALGPEVGVS) lie on the Cytoplasmic side of the membrane. The chain crosses the membrane as a helical span at residues 222 to 242 (IGLCFFLGNAVAGAMYVLGAV). At 243–287 (ETFLDAVPSAEFFQESVTVVTNTFVNGTAAGNATTISTPNLHDLQ) the chain is on the extracellular side. N268 and N274 each carry an N-linked (GlcNAc...) asparagine glycan. Residues 288-308 (VYGIIVTILLCFIVFGGVKII) traverse the membrane as a helical segment. Topologically, residues 309–311 (NKV) are cytoplasmic. A helical transmembrane segment spans residues 312–332 (APAFLIPVLFSILCIYIGVFI). The Extracellular portion of the chain corresponds to 333–372 (APRPNASKWITGLSITTLKDNWSSDYQRTNNAGVPDPNGS). N337, N353, and N370 each carry an N-linked (GlcNAc...) asparagine glycan. The chain crosses the membrane as a helical span at residues 373-393 (IYWDFNALLGLYFPAVTGIMA). Topologically, residues 394 to 412 (GSNRSASLKDTQRSIPIGT) are cytoplasmic. Residues 413-433 (LHATISTTMMYLLSVFLFGAL) form a helical membrane-spanning segment. Topologically, residues 434–448 (STREGLLTDRLLCAA) are extracellular. Residues 449–469 (VAWPSPAVVYAGIILSTLGAA) form a helical membrane-spanning segment. Topologically, residues 470-505 (LQSLTGAPRLLAAIANDDILPVLNYFKAYEGSEPHV) are cytoplasmic. Residues 506-526 (ATLFTSFICISCVIIGNLDVI) traverse the membrane as a helical segment. Residues 527–529 (TPT) lie on the Extracellular side of the membrane. A helical membrane pass occupies residues 530 to 552 (ITMFFLLCYAGVNLSCFLLDLLD). Residues 553-558 (APSWRP) lie on the Cytoplasmic side of the membrane. The chain crosses the membrane as a helical span at residues 559–579 (RWKLHHWSLSLIGALLCIVIM). Topologically, residues 580–585 (FMISWT) are extracellular. The helical transmembrane segment at 586-606 (FTVVSLALASLIYYYVSLKGK) threads the bilayer. Residues 607-994 (AGDWGDGFKS…YRRDVVTLFT (388 aa)) lie on the Cytoplasmic side of the membrane.

It belongs to the SLC12A transporter family.

The protein resides in the membrane. Functionally, probable cation/chloride cotransporter. This is Cation-chloride cotransporter 2 (CCC2) from Oryza sativa subsp. japonica (Rice).